We begin with the raw amino-acid sequence, 72 residues long: Small proline-rich protein 2B (72 aa).

Residues 1 to 11 show a composition bias toward low complexity; it reads MSYQQQQCKQP. The segment at 1–20 is disordered; that stretch reads MSYQQQQCKQPCQPPPVCPT. 3 repeat units span residues 21–29, 30–38, and 39–47. Residues 21 to 47 form a 3 X 9 AA tandem repeats of P-K-C-P-[EQ]-P-C-P-P region; that stretch reads PKCPEPCPPPKCPEPCPPPKCPQPCPP. Positions 42–72 are disordered; it reads PQPCPPQQCQQKYPPVTPSPPCQPKYPPKSK. Residues 56–72 are compositionally biased toward pro residues; sequence PVTPSPPCQPKYPPKSK.

It belongs to the cornifin (SPRR) family. As to expression, suprabasal layers of squamous-differentiated tissues such as epidermis, esophagus, tongue and trachea.

It localises to the cytoplasm. Cross-linked envelope protein of keratinocytes. It is a keratinocyte protein that first appears in the cell cytosol, but ultimately becomes cross-linked to membrane proteins by transglutaminase. All that results in the formation of an insoluble envelope beneath the plasma membrane. This chain is Small proline-rich protein 2B (SPRR2B), found in Homo sapiens (Human).